Consider the following 478-residue polypeptide: Protein MAINTENANCE OF MERISTEMS (478 aa).

Residues 459–478 form a disordered region; sequence ASTTNKRKRREEQQQTDWSE. The Nuclear localization signal signature appears at 464 to 468; that stretch reads KRKRR.

As to expression, expressed in root meristem, root vasculature, shoot apical meristem (SAM), leaf vasculature and ovules.

It localises to the nucleus. Functionally, required for the organization of the root apical meristem (RAM) and the shoot apical meristem (SAM). Required to maintain genome stability and cell division activity in meristematic cells. This is Protein MAINTENANCE OF MERISTEMS from Arabidopsis thaliana (Mouse-ear cress).